A 696-amino-acid polypeptide reads, in one-letter code: Gametogenetin-binding protein 2 (696 aa).

Phosphoserine occurs at positions 360 and 602.

As to quaternary structure, interacts with isoform 1 of GGN. Testis-specific.

It is found in the cytoplasmic vesicle. Its function is as follows. May be involved in spermatogenesis. The chain is Gametogenetin-binding protein 2 (Ggnbp2) from Mus musculus (Mouse).